The primary structure comprises 84 residues: Small ribosomal subunit protein bS16 (84 aa).

This sequence belongs to the bacterial ribosomal protein bS16 family.

The sequence is that of Small ribosomal subunit protein bS16 from Paraburkholderia phytofirmans (strain DSM 17436 / LMG 22146 / PsJN) (Burkholderia phytofirmans).